Here is a 745-residue protein sequence, read N- to C-terminus: Catalase-peroxidase (745 aa).

Residues 97-223 (WHSAGTYRTG…LAAVQMGLIY (127 aa)) constitute a cross-link (tryptophyl-tyrosyl-methioninium (Trp-Tyr) (with M-249)). Histidine 98 acts as the Proton acceptor in catalysis. Residues 223–249 (YVNPEGPDGSPDPWASARDIRMTFARM) constitute a cross-link (tryptophyl-tyrosyl-methioninium (Tyr-Met) (with W-97)). Histidine 264 contributes to the heme b binding site. A disordered region spans residues 345 to 368 (KQWQPVNPKPEDLAPGAHSPDRRV).

The protein belongs to the peroxidase family. Peroxidase/catalase subfamily. Homodimer or homotetramer. The cofactor is heme b. Post-translationally, formation of the three residue Trp-Tyr-Met cross-link is important for the catalase, but not the peroxidase activity of the enzyme.

It carries out the reaction H2O2 + AH2 = A + 2 H2O. The catalysed reaction is 2 H2O2 = O2 + 2 H2O. Bifunctional enzyme with both catalase and broad-spectrum peroxidase activity. The protein is Catalase-peroxidase of Phenylobacterium zucineum (strain HLK1).